We begin with the raw amino-acid sequence, 361 residues long: Replication-associated protein (361 aa).

The segment at 1-31 is disordered; that stretch reads MSSLPVSESEGEGSGTSVQVPSRGGQVTPGE. The CRESS-DNA virus Rep endonuclease domain occupies 35–138; sequence SLRTKHVFLT…PESSWEFGKF (104 aa). The RCR-1 motif lies at 42–45; the sequence is FLTY. E76, H84, and H86 together coordinate a divalent metal cation. The short motif at 84–86 is the RCR-2 element; sequence HLH. Y124 functions as the For DNA cleavage activity in the catalytic mechanism. Residues 124–127 carry the RCR-3 motif; it reads YCMK. The oligomerization stretch occupies residues 192 to 204; sequence SANALFPDPPQTY. Residue 243 to 250 participates in ATP binding; sequence GPTRTGKT. The segment at 266 to 285 is transactivation; that stretch reads VNFLEEWNCQAQFNIIDDIP. A Nuclear localization signal motif is present at residues 307-317; it reads KYGKKKRIPNG.

The protein belongs to the geminiviridae Rep protein family. In terms of assembly, homooligomer. Rep binds to repeated DNA motifs (iterons). Forms the O-complex, which is a Rep-DNA complex involved in the initiation of RCR. Part of the C- and V-complexes which are RepA-Rep-DNA complexes involved in the c-sense and v-sense transcription. The cofactor is Mg(2+). Requires Mn(2+) as cofactor.

Its subcellular location is the host nucleus. Essential for the replication of viral ssDNA. The closed circular ssDNA genome is first converted to a superhelical dsDNA. Rep binds a specific region at the genome origin of replication. It introduces an endonucleolytic nick within the conserved sequence 5'-TAATATTAC-3' in the intergenic region of the genome present in all geminiviruses, thereby initiating the rolling circle replication (RCR). Following cleavage, binds covalently to the 5'-phosphate of DNA as a tyrosyl ester. The cleavage gives rise to a free 3'-OH that serves as a primer for the cellular DNA polymerase. The polymerase synthesizes the (+) strand DNA by rolling circle mechanism. After one round of replication, a Rep-catalyzed nucleotidyl transfer reaction releases a circular single-stranded virus genome, thereby terminating the replication. Displays origin-specific DNA cleavage, nucleotidyl transferase, ATPase and helicase activities. Acts as an inhibitor of C-sense gene transcription. The polypeptide is Replication-associated protein (Avena sativa (Oat)).